The primary structure comprises 639 residues: tRNA uridine 5-carboxymethylaminomethyl modification enzyme MnmG (639 aa).

FAD contacts are provided by residues 13-18 (GGGHAG), Val-125, and Ser-180. 273 to 287 (GPRYCPSIEDKVVRF) is an NAD(+) binding site. Gln-370 provides a ligand contact to FAD. The segment at 620 to 639 (KRQGGNGPQSPRPDDGRARA) is disordered.

This sequence belongs to the MnmG family. Homodimer. Heterotetramer of two MnmE and two MnmG subunits. Requires FAD as cofactor.

It is found in the cytoplasm. In terms of biological role, NAD-binding protein involved in the addition of a carboxymethylaminomethyl (cmnm) group at the wobble position (U34) of certain tRNAs, forming tRNA-cmnm(5)s(2)U34. The sequence is that of tRNA uridine 5-carboxymethylaminomethyl modification enzyme MnmG from Thioalkalivibrio sulfidiphilus (strain HL-EbGR7).